A 1025-amino-acid chain; its full sequence is DNA polymerase (1025 aa).

The protein belongs to the DNA polymerase type-B family.

It carries out the reaction DNA(n) + a 2'-deoxyribonucleoside 5'-triphosphate = DNA(n+1) + diphosphate. Functionally, replicates the viral genome. Host DNA polymerases cannot substitute for the viral enzyme in this process. The protein is DNA polymerase of Noctuidae (owlet moths).